Consider the following 151-residue polypeptide: NADH dehydrogenase [ubiquinone] 1 beta subcomplex subunit 11, mitochondrial (151 aa).

The N-terminal 29 residues, methionine 1–tryptophan 29, are a transit peptide targeting the mitochondrion. Residues serine 39 to glutamate 62 are disordered. The helical transmembrane segment at valine 87–leucine 107 threads the bilayer.

It belongs to the complex I NDUFB11 subunit family. As to quaternary structure, complex I is composed of 45 different subunits. Interacts with BCAP31.

Its subcellular location is the mitochondrion inner membrane. Functionally, accessory subunit of the mitochondrial membrane respiratory chain NADH dehydrogenase (Complex I), that is believed not to be involved in catalysis. Complex I functions in the transfer of electrons from NADH to the respiratory chain. The immediate electron acceptor for the enzyme is believed to be ubiquinone. This chain is NADH dehydrogenase [ubiquinone] 1 beta subcomplex subunit 11, mitochondrial (NDUFB11), found in Cricetulus griseus (Chinese hamster).